The following is a 214-amino-acid chain: External core antigen (214 aa).

The first 19 residues, 1–19 (MQLFHLCLIISCTCPTVQA), serve as a signal peptide directing secretion. The interval 25–27 (GWL) is HBEAG. The segment at 165-214 (NAPILSTLPETTVVRRRDRGRSPRRRTPSPRRRRSQSPRRRRSQSRESQC) is disordered. Positions 178–207 (VRRRDRGRSPRRRTPSPRRRRSQSPRRRRS) are enriched in basic residues. Residues 186–192 (SPRRRTP) form a 1; half-length repeat. The interval 186 to 208 (SPRRRTPSPRRRRSQSPRRRRSQ) is 3 X 8 AA repeats of S-P-R-R-R-R-S-Q. Residues 186–214 (SPRRRTPSPRRRRSQSPRRRRSQSRESQC) constitute a propeptide that is removed on maturation. Repeat copies occupy residues 193–200 (SPRRRRSQ) and 201–208 (SPRRRRSQ).

The protein belongs to the orthohepadnavirus precore antigen family. In terms of assembly, homodimerizes. In terms of processing, phosphorylated. Cleaved by host furin.

Its subcellular location is the secreted. It localises to the host nucleus. Its function is as follows. May regulate immune response to the intracellular capsid in acting as a T-cell tolerogen, by having an immunoregulatory effect which prevents destruction of infected cells by cytotoxic T-cells. This immune regulation may predispose to chronicity during perinatal infections and prevent severe liver injury during adult infections. This is External core antigen from Hepatitis B virus genotype A2 subtype adw2 (isolate Germany/991/1990) (HBV-A).